The sequence spans 391 residues: Elongation factor Tu (391 aa).

The tr-type G domain maps to 10–201 (KPHVNIGTIG…AVDSYIPTPE (192 aa)). The interval 19–26 (GHVDHGKT) is G1. Residue 19–26 (GHVDHGKT) participates in GTP binding. Mg(2+) is bound at residue Thr-26. Positions 55-59 (GITIS) are G2. Positions 76–79 (DCPG) are G3. Residues 76-80 (DCPGH) and 131-134 (NKCD) contribute to the GTP site. Residues 131–134 (NKCD) form a G4 region. Positions 169–171 (SAL) are G5.

Belongs to the TRAFAC class translation factor GTPase superfamily. Classic translation factor GTPase family. EF-Tu/EF-1A subfamily. In terms of assembly, monomer.

Its subcellular location is the cytoplasm. The enzyme catalyses GTP + H2O = GDP + phosphate + H(+). Its function is as follows. GTP hydrolase that promotes the GTP-dependent binding of aminoacyl-tRNA to the A-site of ribosomes during protein biosynthesis. In Brucella canis (strain ATCC 23365 / NCTC 10854 / RM-666), this protein is Elongation factor Tu.